We begin with the raw amino-acid sequence, 132 residues long: Small ribosomal subunit protein uS11c (132 aa).

Belongs to the universal ribosomal protein uS11 family. In terms of assembly, part of the 30S ribosomal subunit.

It localises to the plastid. The protein localises to the chloroplast. This Cryptomeria japonica (Japanese cedar) protein is Small ribosomal subunit protein uS11c.